Consider the following 197-residue polypeptide: ATP-dependent Clp protease proteolytic subunit (197 aa).

Residue Ser102 is the Nucleophile of the active site. Residue His127 is part of the active site.

Belongs to the peptidase S14 family. In terms of assembly, fourteen ClpP subunits assemble into 2 heptameric rings which stack back to back to give a disk-like structure with a central cavity, resembling the structure of eukaryotic proteasomes.

The protein resides in the cytoplasm. The catalysed reaction is Hydrolysis of proteins to small peptides in the presence of ATP and magnesium. alpha-casein is the usual test substrate. In the absence of ATP, only oligopeptides shorter than five residues are hydrolyzed (such as succinyl-Leu-Tyr-|-NHMec, and Leu-Tyr-Leu-|-Tyr-Trp, in which cleavage of the -Tyr-|-Leu- and -Tyr-|-Trp bonds also occurs).. In terms of biological role, cleaves peptides in various proteins in a process that requires ATP hydrolysis. Has a chymotrypsin-like activity. Plays a major role in the degradation of misfolded proteins. The chain is ATP-dependent Clp protease proteolytic subunit from Buchnera aphidicola subsp. Schizaphis graminum (strain Sg).